The chain runs to 421 residues: MADLKRTQPLARDAMAYVLAGGRGSRLKELTDRRAKPAVYFGGKTRIIDFALSNALNSGIRRLGVATQYKAHSLIRHLQRGWNFLRPERNESFDILPASQRVSETQWYEGTADAVYQNIDIIEAYGPEYMVILAGDHIYKMDYEMMLRQHVDANADVTVGCLEVPRMEATGFGVMHVDAKDNIIAFVEKPADPPGIPGNPDFALASMGIYVFKTKFLMEQLRRDAAEPGSSRDFGKDIIPYIVQHGKAIAHRFTKSCVRSTAENEAYWRDVGTVDAYWEANIDLTDITPELDLYDRDWPIWTYAELKPPAKFVHDEDGRRGSAVSSLVSGDCIVSGATLKKSLIFTGARINSYSTLEEVVMLPDVHVGRNAKLKRVVIDHGVRIPEGLVVGEDPALDAKRFRVSEKGICLITQDMINKLGL.

Alpha-D-glucose 1-phosphate contacts are provided by residues tyrosine 108, glycine 173, 188–189 (EK), and serine 206.

The protein belongs to the bacterial/plant glucose-1-phosphate adenylyltransferase family. Homotetramer.

It catalyses the reaction alpha-D-glucose 1-phosphate + ATP + H(+) = ADP-alpha-D-glucose + diphosphate. It functions in the pathway glycan biosynthesis; glycogen biosynthesis. Functionally, involved in the biosynthesis of ADP-glucose, a building block required for the elongation reactions to produce glycogen. Catalyzes the reaction between ATP and alpha-D-glucose 1-phosphate (G1P) to produce pyrophosphate and ADP-Glc. This Mesorhizobium japonicum (strain LMG 29417 / CECT 9101 / MAFF 303099) (Mesorhizobium loti (strain MAFF 303099)) protein is Glucose-1-phosphate adenylyltransferase.